A 377-amino-acid chain; its full sequence is Mechanosensory abnormality protein 6 (377 aa).

The Cytoplasmic portion of the chain corresponds to 1-13 (MGLQSAAAHFINR). A helical transmembrane segment spans residues 14–34 (FIIWITIFMVACFLLRLLVVL). Over 35–377 (DLNKRVYNHT…HCDLTHSYIT (343 aa)) the chain is Extracellular. A disulfide bond links Cys-48 and Cys-369. N-linked (GlcNAc...) asparagine glycosylation is present at Asn-94.

This sequence belongs to the paraoxonase family. As to quaternary structure, component of a non-voltage-gated amiloride-sensitive cation channel complex (also called the degenerin channel complex) composed of at least the mec-2, mec-4, mec-6 and mec-10 subunits; the complex mediates mechanotransduction in touch cells. Interacts with mec-2, mec-4 and mec-10. Post-translationally, glycosylated. Expressed in neurons including the six touch receptors, ventral cord motor neurons, HSN, PVD, PVC, IL1, and several neurons near the nerve ring, in the anal ganglion and in the male tail sensory rays, in muscles including the body wall, vulval, intestinal, anal depressor and sphincter muscles, and in the excretory canal.

It localises to the cell membrane. The protein resides in the cell projection. Its subcellular location is the axon. Subunit of an amiloride-sensitive cation channel (degenerin channel complex) permeable for sodium, potassium, lithium and N-methylglucamine, and required for mechanosensory transduction (touch sensitivity). Interacts with degenerin channel proteins and stabilizes the channel. Plays a role in mechanosensory transduction (touch sensitivity). The sequence is that of Mechanosensory abnormality protein 6 from Caenorhabditis elegans.